Consider the following 227-residue polypeptide: MRNGTLVLAALLTLFVLAGSSSAADVGIELDKNMSDGSPIKPTYNSTIKIKAIVKAWNLDVQNATARVQLPEGLVVQDYYMSQGYYDLETGTWEIGDIPAYEERSLTFICLLNRTGSVTVNANVTADGDDNSANNNAELTFKVFGISDLEVNVTGNKETARIGDTVRITVKLKNRGPHDANNIKIGNFLSGGLVVQNFSYDAGYFDDITREWIFETLAAGEEAKSKP.

To ORF5 in pFZ1.

This is an uncharacterized protein from Methanothermobacter thermautotrophicus (Methanobacterium thermoformicicum).